The following is a 353-amino-acid chain: Protein RecA (353 aa).

67-74 (GPESSGKT) is an ATP binding site.

Belongs to the RecA family.

It is found in the cytoplasm. Its function is as follows. Can catalyze the hydrolysis of ATP in the presence of single-stranded DNA, the ATP-dependent uptake of single-stranded DNA by duplex DNA, and the ATP-dependent hybridization of homologous single-stranded DNAs. It interacts with LexA causing its activation and leading to its autocatalytic cleavage. In Shewanella loihica (strain ATCC BAA-1088 / PV-4), this protein is Protein RecA.